A 350-amino-acid polypeptide reads, in one-letter code: tRNA uridine(34) hydroxylase (350 aa).

The Rhodanese domain occupies 146–240 (DDPDAVFIDM…YARRAREQGL (95 aa)). Cysteine 200 functions as the Cysteine persulfide intermediate in the catalytic mechanism. The span at 319 to 328 (RRRRAGRENG) shows a compositional bias: basic and acidic residues. Residues 319-350 (RRRRAGRENGNKIFNKSRGRLNSKLSIPDPAE) form a disordered region.

Belongs to the TrhO family.

It carries out the reaction uridine(34) in tRNA + AH2 + O2 = 5-hydroxyuridine(34) in tRNA + A + H2O. In terms of biological role, catalyzes oxygen-dependent 5-hydroxyuridine (ho5U) modification at position 34 in tRNAs. The sequence is that of tRNA uridine(34) hydroxylase from Salmonella choleraesuis (strain SC-B67).